The primary structure comprises 352 residues: Histidine biosynthesis bifunctional protein HisB (352 aa).

Residues 1 to 164 (MSQKILFIDR…EIENEILSSF (164 aa)) are histidinol-phosphatase. The Nucleophile role is filled by aspartate 9. 2 residues coordinate Mg(2+): aspartate 9 and aspartate 11. Catalysis depends on aspartate 11, which acts as the Proton donor. Positions 93, 95, 101, and 103 each coordinate Zn(2+). Aspartate 130 provides a ligand contact to Mg(2+). The imidazoleglycerol-phosphate dehydratase stretch occupies residues 165-352 (RSASYQRTTK…ENLASSKGVI (188 aa)).

In the N-terminal section; belongs to the histidinol-phosphatase family. This sequence in the C-terminal section; belongs to the imidazoleglycerol-phosphate dehydratase family. It depends on Mg(2+) as a cofactor. Requires Zn(2+) as cofactor.

It localises to the cytoplasm. It catalyses the reaction D-erythro-1-(imidazol-4-yl)glycerol 3-phosphate = 3-(imidazol-4-yl)-2-oxopropyl phosphate + H2O. It carries out the reaction L-histidinol phosphate + H2O = L-histidinol + phosphate. It functions in the pathway amino-acid biosynthesis; L-histidine biosynthesis; L-histidine from 5-phospho-alpha-D-ribose 1-diphosphate: step 6/9. Its pathway is amino-acid biosynthesis; L-histidine biosynthesis; L-histidine from 5-phospho-alpha-D-ribose 1-diphosphate: step 8/9. This Campylobacter jejuni subsp. jejuni serotype O:2 (strain ATCC 700819 / NCTC 11168) protein is Histidine biosynthesis bifunctional protein HisB.